The sequence spans 323 residues: Aldo-keto reductase family 1 member C4 (323 aa).

Residues 20 to 24 (GFGSY) and Asp-50 each bind NADP(+). The Proton donor role is filled by Tyr-55. His-117 provides a ligand contact to substrate. Residues 166–167 (SN), Gln-190, 216–221 (HSALGT), and 270–280 (KSYNEQRIREN) each bind NADP(+).

Belongs to the aldo/keto reductase family. Monomer. As to expression, high expression in liver. Also expressed in kidney.

The protein resides in the cytoplasm. It localises to the cytosol. It carries out the reaction chlordecone alcohol + NADP(+) = chlordecone + NADPH + H(+). It catalyses the reaction a 3alpha-hydroxysteroid + NADP(+) = a 3-oxosteroid + NADPH + H(+). The enzyme catalyses a 3alpha-hydroxysteroid + NAD(+) = a 3-oxosteroid + NADH + H(+). The catalysed reaction is 5alpha-androstane-3alpha,17beta-diol + NADP(+) = 17beta-hydroxy-5alpha-androstan-3-one + NADPH + H(+). It carries out the reaction 5alpha-androstane-3beta,17beta-diol + NADP(+) = 17beta-hydroxy-5alpha-androstan-3-one + NADPH + H(+). It catalyses the reaction 5alpha-androstane-3alpha,17beta-diol + NAD(+) = 17beta-hydroxy-5alpha-androstan-3-one + NADH + H(+). The enzyme catalyses 17beta-estradiol + NADP(+) = estrone + NADPH + H(+). The catalysed reaction is 17beta-estradiol + NAD(+) = estrone + NADH + H(+). It carries out the reaction (20S)-hydroxypregn-4-en-3-one + NADP(+) = progesterone + NADPH + H(+). It catalyses the reaction (20S)-hydroxypregn-4-en-3-one + NAD(+) = progesterone + NADH + H(+). The enzyme catalyses androsterone + NADP(+) = 5alpha-androstan-3,17-dione + NADPH + H(+). The catalysed reaction is testosterone + NADP(+) = androst-4-ene-3,17-dione + NADPH + H(+). It carries out the reaction testosterone + NAD(+) = androst-4-ene-3,17-dione + NADH + H(+). It catalyses the reaction 3alpha-hydroxy-5alpha-androstane 17-O-(beta-D-glucuronate) + NADP(+) = 5alpha-dihydrotestosterone 17-O-(beta-D-glucuronate) + NADPH + H(+). The enzyme catalyses (3beta,5alpha,17beta)-3-hydroxy-androstan-17-yl sulfate + NADP(+) = 5alpha-dihydrotestosterone sulfate + NADPH + H(+). The catalysed reaction is 5alpha-androstane-3alpha,17beta-diol + NAD(+) = androsterone + NADH + H(+). Its pathway is steroid metabolism. Its activity is regulated as follows. Potently inhibited by benzbromarone, 3',3'',5',5''-tetrabromophenolphthalein (TBPP) and o-cresolphthalein. Cytosolic aldo-keto reductase that catalyzes the NADH and NADPH-dependent reduction of ketosteroids to hydroxysteroids. Liver specific enzyme that acts as an NAD(P)(H)-dependent 3-, 17- and 20-ketosteroid reductase on the steroid nucleus and side chain. Displays the ability to catalyze both oxidation and reduction in vitro, but most probably acts as a reductase in vivo since the oxidase activity measured in vitro is inhibited by physiological concentration of NADPH. Acts preferentially as a 3-alpha-hydroxysteroid dehydrogenase (HSD) with a subsidiary 3-beta-HSD activity. Catalyzes efficiently the transformation of the potent androgen 5-alpha-dihydrotestosterone (5alpha-DHT or 17beta-hydroxy-5alpha-androstan-3-one) into the less active form, 5-alpha-androstan-3-alpha,17-beta-diol (3-alpha-diol). Catalyzes the reduction of estrone into 17beta-estradiol but with low efficiency. Metabolizes a broad spectrum of natural and synthetic therapeutic steroid and plays an important role in metabolism of androgens, estrogens, progestereone and conjugated steroids. Catalyzes the biotransformation of the pesticide chlordecone (kepone) to its corresponding alcohol leading to increased biliary excretion of the pesticide and concomitant reduction of its neurotoxicity since bile is the major excretory route. The chain is Aldo-keto reductase family 1 member C4 (AKR1C4) from Macaca fuscata fuscata (Japanese macaque).